Here is a 39-residue protein sequence, read N- to C-terminus: SPbeta prophage-derived uncharacterized protein YorT (39 aa).

This is SPbeta prophage-derived uncharacterized protein YorT (yorT) from Bacillus subtilis (strain 168).